Reading from the N-terminus, the 219-residue chain is Thiopurine S-methyltransferase (219 aa).

Residues W10, L45, E66, and R123 each coordinate S-adenosyl-L-methionine.

Belongs to the class I-like SAM-binding methyltransferase superfamily. TPMT family.

The protein resides in the cytoplasm. The catalysed reaction is S-adenosyl-L-methionine + a thiopurine = S-adenosyl-L-homocysteine + a thiopurine S-methylether.. This is Thiopurine S-methyltransferase from Bordetella petrii (strain ATCC BAA-461 / DSM 12804 / CCUG 43448).